We begin with the raw amino-acid sequence, 457 residues long: Flavohemoprotein-2 (457 aa).

In terms of domain architecture, Globin spans 2 to 157; sequence ALSEDTIKAV…LADLLIKREE (156 aa). His106 provides a ligand contact to heme b. Residues Tyr116 and Glu156 each act as charge relay system in the active site. A reductase region spans residues 168 to 456; sequence GGWRQTRTFR…FEMFGPFKAS (289 aa). The 108-residue stretch at 171 to 278 folds into the FAD-binding FR-type domain; the sequence is RQTRTFRVEE…APPYGDFFLR (108 aa). FAD is bound by residues Tyr210 and 227–230; that span reads RQYS. An NADP(+)-binding site is contributed by 320-325; sequence GIGQTP. 449–452 contributes to the FAD binding site; the sequence is MFGP.

Belongs to the globin family. Two-domain flavohemoproteins subfamily. It in the C-terminal section; belongs to the flavoprotein pyridine nucleotide cytochrome reductase family. Monomer. Heme b is required as a cofactor. FAD serves as cofactor.

The enzyme catalyses 2 nitric oxide + NADPH + 2 O2 = 2 nitrate + NADP(+) + H(+). The catalysed reaction is 2 nitric oxide + NADH + 2 O2 = 2 nitrate + NAD(+) + H(+). In terms of biological role, flavohemoprotein involved in nitric oxide (NO) detoxification in an aerobic process, termed nitric oxide dioxygenase (NOD) reaction that utilizes O(2) and NAD(P)H to convert NO to nitrate, which protects the protozoan parasite from various noxious nitrogen compounds. Therefore, plays a central role in the inducible response to nitrosative stress. May also be involved in O(2) detoxification. This is Flavohemoprotein-2 (hmpA-2) from Giardia intestinalis (strain P15) (Giardia lamblia).